The following is a 454-amino-acid chain: tRNA modification GTPase MnmE (454 aa).

Residues Arg-23, Glu-80, and Lys-120 each contribute to the (6S)-5-formyl-5,6,7,8-tetrahydrofolate site. The TrmE-type G domain occupies 216 to 377 (GMKVVIAGRP…LRNHLKQSMG (162 aa)). Asn-226 contacts K(+). GTP contacts are provided by residues 226–231 (NAGKSS), 245–251 (TDIAGTT), 270–273 (DTAG), 335–338 (NKAD), and 358–360 (SAR). Ser-230 serves as a coordination point for Mg(2+). K(+)-binding residues include Thr-245, Ile-247, and Thr-250. Residue Thr-251 participates in Mg(2+) binding. Lys-454 lines the (6S)-5-formyl-5,6,7,8-tetrahydrofolate pocket.

Belongs to the TRAFAC class TrmE-Era-EngA-EngB-Septin-like GTPase superfamily. TrmE GTPase family. Homodimer. Heterotetramer of two MnmE and two MnmG subunits. K(+) is required as a cofactor.

It is found in the cytoplasm. Exhibits a very high intrinsic GTPase hydrolysis rate. Involved in the addition of a carboxymethylaminomethyl (cmnm) group at the wobble position (U34) of certain tRNAs, forming tRNA-cmnm(5)s(2)U34. The protein is tRNA modification GTPase MnmE of Escherichia coli O127:H6 (strain E2348/69 / EPEC).